The chain runs to 84 residues: Small ribosomal subunit protein uS17 (84 aa).

Belongs to the universal ribosomal protein uS17 family. Part of the 30S ribosomal subunit.

One of the primary rRNA binding proteins, it binds specifically to the 5'-end of 16S ribosomal RNA. The protein is Small ribosomal subunit protein uS17 of Clostridium kluyveri (strain NBRC 12016).